Here is a 153-residue protein sequence, read N- to C-terminus: Large ribosomal subunit protein uL13 (153 aa).

Residues 128–153 (SEHPHEAQSPEVLDVTSMNSKNTRSA) are disordered. The span at 143–153 (TSMNSKNTRSA) shows a compositional bias: polar residues.

Belongs to the universal ribosomal protein uL13 family. In terms of assembly, part of the 50S ribosomal subunit.

Functionally, this protein is one of the early assembly proteins of the 50S ribosomal subunit, although it is not seen to bind rRNA by itself. It is important during the early stages of 50S assembly. The protein is Large ribosomal subunit protein uL13 of Roseobacter denitrificans (strain ATCC 33942 / OCh 114) (Erythrobacter sp. (strain OCh 114)).